Here is a 3838-residue protein sequence, read N- to C-terminus: Replicase polyprotein 1ab (3838 aa).

The C4-type; atypical zinc finger occupies 8-28 (CMCTPAARVFWNAGQVFCTRC). The Peptidase C31 domain maps to 69 to 180 (ECTPSGCCWL…QPFCPFEEAH (112 aa)). Residues 69 to 182 (ECTPSGCCWL…FCPFEEAHSD (114 aa)) form a PCP1-alpha region. Residues Cys76 and His146 each act as for Nsp1-alpha papain-like cysteine proteinase activity in the active site. Positions 203-204 (MM) are important for host EIF2AK2 inhibition. The interval 269–384 (PNVFDGKCWL…IFRFGAHKWY (116 aa)) is PCP1-beta. Residues 269–385 (PNVFDGKCWL…FRFGAHKWYG (117 aa)) enclose the Peptidase C32 domain. Catalysis depends on for Nsp1-beta papain-like cysteine proteinase activity residues Cys276 and His345. The segment at 418 to 505 (ITTYSPPTDG…GVHWEVEVRS (88 aa)) is OTU-like. A Peptidase C33 domain is found at 420–527 (TYSPPTDGSC…VGVCSEGCVA (108 aa)). Active-site for Nsp2 cysteine proteinase activity residues include Cys429 and His498. Disordered regions lie at residues 728–758 (AIGS…SHPA) and 1027–1064 (SVTP…SHAS). Residues 737-749 (DSKRENMHNSRED) show a composition bias toward basic and acidic residues. 5 helical membrane passes run 1094–1114 (LMTW…TLFS), 1117–1137 (GSMA…LLLC), 1162–1182 (GVFG…SNPV), 1211–1231 (GLVV…LGGS), and 1235–1255 (WHVI…VYVV). Residues 1132–1255 (LALLLCRSYP…DLALSLVYVV (124 aa)) form an HD1 region. Residues 1310–1334 (TGWRGCWRGESPIHQPHQKPIAYAN) are WCCH. Helical transmembrane passes span 1450–1470 (TLAV…GLWF), 1526–1546 (EVGI…RLAL), 1556–1576 (AFCA…PILL), and 1592–1612 (FLVF…GLLW). The segment at 1451 to 1612 (LAVAQVSVWT…LSLGITGLLW (162 aa)) is HD2. The 203-residue stretch at 1677 to 1879 (GAFRTHKPCL…SLLASVPVME (203 aa)) folds into the Peptidase S32 domain. Catalysis depends on charge relay system; for 3C-like serine proteinase activity residues His1715, Asp1740, and Ser1793. Helical transmembrane passes span 1875–1895 (VPVM…FLLW), 1916–1936 (ILPA…LAWA), 1960–1980 (LAFY…AFAG), 2003–2023 (SYVP…LWLF), and 2029–2048 (HNML…RYFA). The interval 1902-2023 (WTPIVAVGFF…HALGVILWLF (122 aa)) is HD3. One can recognise a NiRAN domain in the interval 2364–2527 (IISQLQGLTT…LPYKLYPVRG (164 aa)). In terms of domain architecture, RdRp catalytic spans 2765-2899 (AGRCLEADLA…LYAERPTFPN (135 aa)). Residues 3021–3084 (GKKFRHCGIC…SPVGAGRSPL (64 aa)) enclose the AV ZBD domain. Cys3027, Cys3030, Cys3040, Cys3045, His3048, His3050, His3052, His3054, Cys3061, His3063, Cys3070, and Cys3073 together coordinate Zn(2+). The (+)RNA virus helicase ATP-binding domain maps to 3134-3293 (DLPDGDYQVV…VFDQMPQKQL (160 aa)). Residue 3168–3175 (VGPPGSGK) coordinates ATP. Positions 3294–3423 (TTIYRFGPNI…FSRGDDLVVL (130 aa)) constitute a (+)RNA virus helicase C-terminal domain. One can recognise an AV-Nsp11N/CoV-Nsp15M domain in the interval 3462–3559 (EGSCMPLPQV…LTLYIRGEPQ (98 aa)). Residues 3561-3683 (LPETLVSTGR…MVWKGATAYF (123 aa)) enclose the NendoU domain. Active-site residues include His3592, His3607, and Lys3636.

Belongs to the arteriviridae polyprotein family. Nsp1-alpha papain-like: Interacts with host RNF31. In terms of assembly, interacts with host EIF2AK2; this interaction occurs in host stress granules and leads to EIF2AK2 inhibition. Interacts with host G3BP1; this interaction probably plays a role in Nsp1-beta-mediated inhibition of host EIF2AK2. As to quaternary structure, interacts with host DDX18; this interaction redistributes host DDX18 to the cytoplasm. Interacts with host IFITM1. In terms of assembly, interacts with host DDX5. As to quaternary structure, interacts with host OTULIN. Interacts with host LGALS3. Post-translationally, specific enzymatic cleavages in vivo by its own proteases yield mature proteins. Nsp1 is autocleaved into two subunits, Nsp1-alpha and Nsp1-beta. There are two alternative pathways for processing. Either nsp4-5 is cleaved, which represents the major pathway or the nsp5-6 and nsp6-7 are processed, which represents the minor pathway. The major pathway occurs when nsp2 acts as a cofactor for nsp4.

The protein localises to the host nucleus. It is found in the host cytoplasm. Its subcellular location is the host membrane. The protein resides in the host endoplasmic reticulum. It localises to the host perinuclear region. The enzyme catalyses RNA(n) + a ribonucleoside 5'-triphosphate = RNA(n+1) + diphosphate. The catalysed reaction is ATP + H2O = ADP + phosphate + H(+). It catalyses the reaction Thiol-dependent hydrolysis of ester, thioester, amide, peptide and isopeptide bonds formed by the C-terminal Gly of ubiquitin (a 76-residue protein attached to proteins as an intracellular targeting signal).. It carries out the reaction uridylyl-uridylyl-ribonucleotide-RNA = a 3'-end uridylyl-2',3'-cyclophospho-uridine-RNA + a 5'-end dephospho-ribonucleoside-RNA. Its function is as follows. Contains the activities necessary for the transcription of negative stranded RNA, leader RNA, subgenomic mRNAs and progeny virion RNA as well as proteinases responsible for the cleavage of the polyprotein into functional products. Inhibits host IFN-beta production. Plays a role in the degradation of the host transcriptional activator CREBBP protein. The degradation of host CREBBP which is a key component of the IFN enhanceosome is likely responsible for the inhibition of interferon mediated by Nsp1-alpha. Also participates in the inhibition of host NF-kappa-B activation by counteracting LUBAC-dependent induction of NF-kappa-B. Reduces host NEMO ubiquitination by blocking the interaction between the two LUBAC complex components RNF31 and SHARPIN. Functionally, plays a role in blocking host mRNA nuclear export to the cytoplasm and subversion of host protein synthesis. Additionally, inhibits the interferon-activated JAK/STAT signal transduction by mediating the ubiquitination and subsequent proteasomal degradation of host KPNA1. Repurposes the host antiviral stress granules into a proviral platform to counteract the EIF2AK2/PKR restriction, thereby regulating the host inflammatory response. In terms of biological role, multifunctional protein that acts as a viral protease and as a viral antagonist of host immune response. Cleaves the nsp2/nsp3 site in the viral polyprotein. Displays deubiquitinating activity that cleaves both ubiquitinated and ISGylated products and therefore inhibits ubiquitin and ISG15-dependent host innate immunity. Also deubiquinates host NFKBIA, thereby interfering with NFKBIA degradation and impairing subsequent NF-kappa-B activation. Its function is as follows. Plays a role in the inhibition of the immune response by interacting with host IFITM1. This interaction leads to the proteasomal degradation of the IFN-induced antiviral protein IFITM1. Cleaves the majority of cleavage sites present in the C-terminus of the polyprotein. Triggers host apoptosis through caspase-3, -8, and -9 activations. Subverts host innate immune responses through its protease activity. Targets the NF-kappa-B essential modulator NEMO and mediates its cleavage. Blocks host interferon beta induction and downstream signaling by cleaving mitochondrial MAVS, dislodging it from the mitochondria. Impairs host defense by cleaving host mRNA-decapping enzyme DCP1A to attenuate its antiviral activity. Functionally, plays a role in the initial induction of autophagosomes from host endoplasmic reticulum. In terms of biological role, plays a role in the inhibition of host STAT3 signaling pathway by inducing the degradation of STAT3. Its function is as follows. Responsible for replication and transcription of the viral RNA genome. Displays RNA and DNA duplex-unwinding activities with 5' to 3' polarity. Functionally, plays a role in viral transcription/replication and prevents the simultaneous activation of host cell dsRNA sensors, such as MDA5/IFIH1, OAS, PKR and NLRP3 inflammasome. Acts by degrading the 5'-polyuridines generated during replication of the poly(A) region of viral genomic and subgenomic RNAs. Catalyzes a two-step reaction in which a 2'3'-cyclic phosphate (2'3'-cP) is first generated by 2'-O transesterification, which is then hydrolyzed to a 3'-phosphate (3'-P). If not degraded, poly(U) RNA would hybridize with poly(A) RNA tails and activate host dsRNA sensors. Also plays a role in the inhibition of host type I interferon production by recruiting host OTULIN to promote removal of linear ubiquitination targeting host NEMO. This chain is Replicase polyprotein 1ab, found in Sus scrofa (Pig).